A 142-amino-acid chain; its full sequence is 3-hydroxyacyl-[acyl-carrier-protein] dehydratase FabZ (142 aa).

H49 is an active-site residue.

Belongs to the thioester dehydratase family. FabZ subfamily.

The protein localises to the cytoplasm. It catalyses the reaction a (3R)-hydroxyacyl-[ACP] = a (2E)-enoyl-[ACP] + H2O. Involved in unsaturated fatty acids biosynthesis. Catalyzes the dehydration of short chain beta-hydroxyacyl-ACPs and long chain saturated and unsaturated beta-hydroxyacyl-ACPs. This chain is 3-hydroxyacyl-[acyl-carrier-protein] dehydratase FabZ, found in Deinococcus geothermalis (strain DSM 11300 / CIP 105573 / AG-3a).